The primary structure comprises 299 residues: MEKNPITLLILNGKSAGNDELREAIGELRKDGYTLHVRVTWEYGDAKRYVEEAIQLKADNVIAAGGDGTVNEVAAALAVQPEAVRPCLGIVPLGTANDFATSCQIPMEMHNALTLAIKGRATAIDIAKVNDGHYFINMATGGFATRITTETPAKMKAALGSASYVLHALFRMDMLQAERCEIHGPDFHWSGDTLVIAVGNGRQAGGGQQLCPEALINDGLLELSVLSATELLPNMLQAWFTGSENQNMISATLPWLEISAPDDMTFNLDGEPLTAKRFRIEVLPAAIHCRLPPQCSLLE.

A DAGKc domain is found at 2-133; sequence EKNPITLLIL…IDIAKVNDGH (132 aa). ATP contacts are provided by residues threonine 40, 66-72, and threonine 95; that span reads GDGTVNE. Mg(2+) contacts are provided by leucine 215, aspartate 218, and leucine 220. Glutamate 271 (proton acceptor) is an active-site residue.

This sequence belongs to the diacylglycerol/lipid kinase family. YegS lipid kinase subfamily. The cofactor is Mg(2+). It depends on Ca(2+) as a cofactor.

It is found in the cytoplasm. In terms of biological role, probably phosphorylates lipids; the in vivo substrate is unknown. This is Probable lipid kinase YegS-like from Pectobacterium atrosepticum (strain SCRI 1043 / ATCC BAA-672) (Erwinia carotovora subsp. atroseptica).